The sequence spans 917 residues: Alanine--tRNA ligase (917 aa).

Positions 615, 619, 719, and 723 each coordinate Zn(2+).

The protein belongs to the class-II aminoacyl-tRNA synthetase family. It depends on Zn(2+) as a cofactor.

The protein localises to the cytoplasm. The catalysed reaction is tRNA(Ala) + L-alanine + ATP = L-alanyl-tRNA(Ala) + AMP + diphosphate. Its function is as follows. Catalyzes the attachment of alanine to tRNA(Ala) in a two-step reaction: alanine is first activated by ATP to form Ala-AMP and then transferred to the acceptor end of tRNA(Ala). Also edits incorrectly charged Ser-tRNA(Ala) and Gly-tRNA(Ala) via its editing domain. This chain is Alanine--tRNA ligase, found in Thermococcus kodakarensis (strain ATCC BAA-918 / JCM 12380 / KOD1) (Pyrococcus kodakaraensis (strain KOD1)).